The primary structure comprises 328 residues: Arylacetonitrilase (328 aa).

One can recognise a CN hydrolase domain in the interval 5–278 (VRVAVTQAEP…EGIIYADLDL (274 aa)). The active-site Proton acceptor is the E45. Residue K125 is part of the active site. The active-site Nucleophile is C160.

It belongs to the carbon-nitrogen hydrolase superfamily. Nitrilase family.

It catalyses the reaction a nitrile + 2 H2O = a carboxylate + NH4(+). The catalysed reaction is 4-chlorophenylacetonitrile + 2 H2O = 4-chlorophenylacetate + NH4(+). Its function is as follows. Nitrilase that hydrolyzes preferentially phenylacetonitrile and (R,S)-mandelonitrile. Also acts on dinitriles like phenylenediacetonitriles (PDAs) 1,2-PDA, 1,3-PDA, and 1,4-PDA, and cyanophenyl acetonitriles (CPAs) 2-CPA and 4-CPA. In Aspergillus kawachii (strain NBRC 4308) (White koji mold), this protein is Arylacetonitrilase (nit2).